We begin with the raw amino-acid sequence, 642 residues long: Threonine--tRNA ligase (642 aa).

The TGS domain occupies 1-61; it reads MPAITLPDGS…AADAQVVFVT (61 aa). Residues 243–536 form a catalytic region; it reads DHRRLGKEMD…LIEQYAGRFP (294 aa). Zn(2+) is bound by residues C336, H387, and H513.

It belongs to the class-II aminoacyl-tRNA synthetase family. As to quaternary structure, homodimer. The cofactor is Zn(2+).

It is found in the cytoplasm. The catalysed reaction is tRNA(Thr) + L-threonine + ATP = L-threonyl-tRNA(Thr) + AMP + diphosphate + H(+). Its function is as follows. Catalyzes the attachment of threonine to tRNA(Thr) in a two-step reaction: L-threonine is first activated by ATP to form Thr-AMP and then transferred to the acceptor end of tRNA(Thr). Also edits incorrectly charged L-seryl-tRNA(Thr). The sequence is that of Threonine--tRNA ligase from Granulibacter bethesdensis (strain ATCC BAA-1260 / CGDNIH1).